The following is a 419-amino-acid chain: UDP-arabinose 4-epimerase 1 (419 aa).

The tract at residues 1–21 is disordered; sequence MFSFGRARSQGRQNRSMSLGG. Over 1 to 32 the chain is Cytoplasmic; that stretch reads MFSFGRARSQGRQNRSMSLGGLDYADPKKKNN. The helical; Signal-anchor for type II membrane protein transmembrane segment at 33–51 threads the bilayer; it reads YLGKILLTASLTALCIFML. The Lumenal segment spans residues 52 to 419; sequence KQSPTFNTPS…GLTTSSVSVY (368 aa). 72–103 contacts NAD(+); the sequence is HVLVTGGAGYIGSHAALRLLKESYRVTIVDNL. Catalysis depends on Y220, which acts as the Proton acceptor.

It belongs to the NAD(P)-dependent epimerase/dehydratase family. NAD(+) serves as cofactor. High expression in roots. Also found in leaves, stems, flowers, and siliques.

The protein resides in the golgi apparatus. It localises to the golgi stack membrane. It catalyses the reaction UDP-beta-L-arabinopyranose = UDP-alpha-D-xylose. It functions in the pathway nucleotide-sugar biosynthesis; UDP-L-arabinose biosynthesis; UDP-L-arabinose from UDP-alpha-D-xylose: step 1/1. Its pathway is cell wall biogenesis; cell wall polysaccharide biosynthesis. Its function is as follows. Acts as a UDP-D-xylose 4-epimerase but lacks both UDP-D-glucose and UDP-D-glucuronic acid 4-epimerase activities in vitro. The sequence is that of UDP-arabinose 4-epimerase 1 from Arabidopsis thaliana (Mouse-ear cress).